Here is a 471-residue protein sequence, read N- to C-terminus: Threonine--tRNA ligase catalytic subunit (471 aa).

Positions 8–333 (THIDYAYELD…YLEHRRGRMP (326 aa)) are catalytic. Positions 112, 166, and 310 each coordinate Zn(2+).

Belongs to the class-II aminoacyl-tRNA synthetase family. In terms of assembly, homodimer. Probably interacts with its editing subunit. Zn(2+) serves as cofactor.

The protein resides in the cytoplasm. It catalyses the reaction tRNA(Thr) + L-threonine + ATP = L-threonyl-tRNA(Thr) + AMP + diphosphate + H(+). In terms of biological role, catalyzes the attachment of threonine to tRNA(Thr) in a two-step reaction: L-threonine is first activated by ATP to form Thr-AMP and then transferred to the acceptor end of tRNA(Thr). This protein is probably not able to deacylate mischarged L-seryl-tRNA(Thr) as it lacks the appropriate domain. In Aeropyrum pernix (strain ATCC 700893 / DSM 11879 / JCM 9820 / NBRC 100138 / K1), this protein is Threonine--tRNA ligase catalytic subunit.